A 262-amino-acid chain; its full sequence is Phosphate import ATP-binding protein PstB 2 (262 aa).

An ABC transporter domain is found at 18-257; sequence FVVRNLDLFY…PSDRRTEDYI (240 aa). Residue 50-57 coordinates ATP; it reads GPSGCGKS.

The protein belongs to the ABC transporter superfamily. Phosphate importer (TC 3.A.1.7) family. As to quaternary structure, the complex is composed of two ATP-binding proteins (PstB), two transmembrane proteins (PstC and PstA) and a solute-binding protein (PstS).

The protein localises to the cell membrane. The enzyme catalyses phosphate(out) + ATP + H2O = ADP + 2 phosphate(in) + H(+). Functionally, part of the ABC transporter complex PstSACB involved in phosphate import. Responsible for energy coupling to the transport system. The protein is Phosphate import ATP-binding protein PstB 2 of Symbiobacterium thermophilum (strain DSM 24528 / JCM 14929 / IAM 14863 / T).